A 470-amino-acid polypeptide reads, in one-letter code: Histidine--tRNA ligase (470 aa).

Belongs to the class-II aminoacyl-tRNA synthetase family. In terms of assembly, homodimer.

Its subcellular location is the cytoplasm. It catalyses the reaction tRNA(His) + L-histidine + ATP = L-histidyl-tRNA(His) + AMP + diphosphate + H(+). In Xanthomonas oryzae pv. oryzae (strain PXO99A), this protein is Histidine--tRNA ligase.